Reading from the N-terminus, the 708-residue chain is Ribosomal RNA large subunit methyltransferase K/L (708 aa).

Residues Gln-43–Met-154 form the THUMP domain.

This sequence belongs to the methyltransferase superfamily. RlmKL family.

It is found in the cytoplasm. It carries out the reaction guanosine(2445) in 23S rRNA + S-adenosyl-L-methionine = N(2)-methylguanosine(2445) in 23S rRNA + S-adenosyl-L-homocysteine + H(+). The enzyme catalyses guanosine(2069) in 23S rRNA + S-adenosyl-L-methionine = N(2)-methylguanosine(2069) in 23S rRNA + S-adenosyl-L-homocysteine + H(+). Functionally, specifically methylates the guanine in position 2445 (m2G2445) and the guanine in position 2069 (m7G2069) of 23S rRNA. The sequence is that of Ribosomal RNA large subunit methyltransferase K/L from Vibrio cholerae serotype O1 (strain ATCC 39541 / Classical Ogawa 395 / O395).